A 437-amino-acid polypeptide reads, in one-letter code: Transcriptional modulator WTM1 (437 aa).

One copy of the WD 1 repeat lies at 103–144; sequence YQGETVSKMAYLDKTGETTLLSMSKNGSLAWFKEGIKVPIHI. A Phosphothreonine modification is found at Thr-187. A Phosphoserine modification is found at Ser-200. WD repeat units lie at residues 221–259, 264–304, and 326–366; these read PGTT…KPIW, PKNG…AATT, and AGGD…SKYN. Residues 368–404 form a disordered region; sequence DDTIAPPQDATEESQTKSLRFLHKGGSRRSPKQIGRR. Thr-370 carries the phosphothreonine modification. Over residues 387-402 the composition is skewed to basic residues; it reads RFLHKGGSRRSPKQIG. Thr-406 bears the Phosphothreonine mark.

Interacts with KAP122.

The protein localises to the cytoplasm. Its subcellular location is the nucleus. Functionally, transcriptional modulator with roles in meiotic regulation and silencing. Acts either as an adapter to facilitate nuclear import by KAP122 of the RNR2-RNR4 heterodimer, also called beta-beta' subunit, which corresponds to the small subunit of the ribonucleotide reductase (RNR); or as an anchor to retain RNR2-RNR4 in the nucleus. The protein is Transcriptional modulator WTM1 (WTM1) of Saccharomyces cerevisiae (strain ATCC 204508 / S288c) (Baker's yeast).